Here is a 146-residue protein sequence, read N- to C-terminus: Probable actin-related protein 2/3 complex subunit 5 (146 aa).

The protein belongs to the ARPC5 family. As to quaternary structure, component of the Arp2/3 complex composed of ARP2, ARP3, ARPC1B/p41-ARC, ARPC2/p34-ARC, ARPC3/p21-ARC, ARPC4/p20-ARC and ARPC5/p16-ARC.

It is found in the cytoplasm. The protein localises to the cytoskeleton. In terms of biological role, functions as a component of the Arp2/3 complex which is involved in regulation of actin polymerization and together with an activating nucleation-promoting factor (NPF) mediates the formation of branched actin networks. The polypeptide is Probable actin-related protein 2/3 complex subunit 5 (Caenorhabditis elegans).